The chain runs to 1450 residues: Phospholipase B1, membrane-associated (1450 aa).

An N-terminal signal peptide occupies residues 1–27 (MESWPGVSLVGLLLLLLLGQGPSQIHG). The Extracellular segment spans residues 28–1422 (SSGENTSQPQ…KAKENSNTLY (1395 aa)). 3 N-linked (GlcNAc...) asparagine glycosylation sites follow: asparagine 32, asparagine 45, and asparagine 179. A run of 3 repeats spans residues 41 to 351 (RTLK…YRNS), 366 to 711 (MKEG…TKNS), and 712 to 1058 (NLGH…FRNS). The tract at residues 41 to 1407 (RTLKNFSFPC…NPFLYTVRNS (1367 aa)) is 4 X 308-326 AA approximate repeats. Active-site residues include serine 404, aspartate 518, and histidine 659. The N-linked (GlcNAc...) asparagine glycan is linked to asparagine 699. A compositionally biased stretch (polar residues) spans 708-720 (TKNSNLGHGTSMS). The disordered stretch occupies residues 708-734 (TKNSNLGHGTSMSCEEKAPSASPPTSV). Asparagine 787, asparagine 801, asparagine 844, asparagine 880, asparagine 926, asparagine 1059, asparagine 1226, asparagine 1280, asparagine 1383, and asparagine 1387 each carry an N-linked (GlcNAc...) asparagine glycan. The stretch at 1068–1407 (IENWGSDFLC…NPFLYTVRNS (340 aa)) is repeat 4. Residues 1408-1450 (QILLDKAKENSNTLYWAVPVAAVGGLVVGILGMMLWRTVRLVQ) are necessary for membrane localization. A helical transmembrane segment spans residues 1423–1443 (WAVPVAAVGGLVVGILGMMLW). Over 1444–1450 (RTVRLVQ) the chain is Cytoplasmic.

Belongs to the 'GDSL' lipolytic enzyme family. Phospholipase B1 subfamily. Post-translationally, undergoes proteolytic cleavage in the ileum. As to expression, expressed in the ileum mucosa, Paneth cells spermatocytes, spermatids and sperm (at protein level). Expressed in the ileum, jejunum, esophagus and testis.

The protein localises to the apical cell membrane. It carries out the reaction a 1,2-diacyl-sn-glycero-3-phosphocholine + H2O = a 1-acyl-sn-glycero-3-phosphocholine + a fatty acid + H(+). It catalyses the reaction a 1-O-alkyl-2-acyl-sn-glycero-3-phosphocholine + H2O = a 1-O-alkyl-sn-glycero-3-phosphocholine + a fatty acid + H(+). The catalysed reaction is a 1-acyl-sn-glycero-3-phosphocholine + H2O = sn-glycerol 3-phosphocholine + a fatty acid + H(+). The enzyme catalyses a triacylglycerol + H2O = a diacylglycerol + a fatty acid + H(+). It carries out the reaction 1,2-dihexadecanoyl-sn-glycero-3-phosphocholine + H2O = 1-hexadecanoyl-sn-glycero-3-phosphocholine + hexadecanoate + H(+). It catalyses the reaction 1-hexadecanoyl-2-(9Z-octadecenoyl)-sn-glycero-3-phosphocholine + H2O = 1-hexadecanoyl-sn-glycero-3-phosphocholine + (9Z)-octadecenoate + H(+). The catalysed reaction is 1,2-di-(9Z-octadecenoyl)-sn-glycero-3-phosphocholine + H2O = 1-(9Z-octadecenoyl)-sn-glycero-3-phosphocholine + (9Z)-octadecenoate + H(+). The enzyme catalyses 1-hexadecanoyl-2-(9Z,12Z-octadecadienoyl)-sn-glycero-3-phosphocholine + H2O = (9Z,12Z)-octadecadienoate + 1-hexadecanoyl-sn-glycero-3-phosphocholine + H(+). It carries out the reaction 1-hexadecanoyl-2-(9Z,12Z-octadecadienoyl)-sn-glycero-3-phosphocholine + H2O = 2-(9Z,12Z-octadecadienoyl)-sn-glycero-3-phosphocholine + hexadecanoate + H(+). It catalyses the reaction 1-hexadecanoyl-2-(9Z-octadecenoyl)-sn-glycero-3-phosphoethanolamine + H2O = 1-hexadecanoyl-sn-glycero-3-phosphoethanolamine + (9Z)-octadecenoate + H(+). The catalysed reaction is 1-hexadecanoyl-2-(9Z-octadecenoyl)-sn-glycero-3-phospho-(1'-sn-glycerol) + H2O = 1-hexadecanoyl-sn-glycero-3-phospho-(1'-sn-glycerol) + (9Z)-octadecenoate + H(+). The enzyme catalyses 1,2-dihexadecanoyl-sn-glycero-3-phosphocholine + 2 H2O = sn-glycerol 3-phosphocholine + 2 hexadecanoate + 2 H(+). It carries out the reaction 1-O-hexadecyl-2-(9Z)-octadecenoyl-sn-glycero-3-phosphocholine + H2O = 1-O-hexadecyl-sn-glycero-3-phosphocholine + (9Z)-octadecenoate + H(+). It catalyses the reaction 1-hexadecanoyl-sn-glycero-3-phosphocholine + H2O = sn-glycerol 3-phosphocholine + hexadecanoate + H(+). The catalysed reaction is 1,2,3-tri-(9Z-octadecenoyl)-glycerol + H2O = di-(9Z)-octadecenoylglycerol + (9Z)-octadecenoate + H(+). The enzyme catalyses 1-hexadecanoyl-2-(9Z)-octadecenoyl-3-octadecanoyl-sn-glycerol + H2O = 1-hexadecanoyl-2-(9Z-octadecenoyl)-sn-glycerol + octadecanoate + H(+). It carries out the reaction 1,3-dihexadecanoyl-2-(9Z-octadecenoyl)glycerol + H2O = 1,3-dihexadecanoylglycerol + (9Z)-octadecenoate + H(+). It catalyses the reaction 1,3-dihexadecanoyl-2-(9Z-octadecenoyl)glycerol + H2O = 1-hexadecanoyl-2-(9Z-octadecenoyl)-glycerol + hexadecanoate + H(+). The catalysed reaction is 1-hexadecanoyl-2-(9Z)-octadecenoyl-3-octadecanoyl-sn-glycerol + H2O = 1-hexadecanoyl-3-octadecanoyl-sn-glycerol + (9Z)-octadecenoate + H(+). The enzyme catalyses 1-hexadecanoyl-2-(9Z)-octadecenoyl-3-octadecanoyl-sn-glycerol + H2O = 2-(9Z-octadecenoyl)-3-octadecanoyl-sn-glycerol + hexadecanoate + H(+). It carries out the reaction 1-octadecanoyl-2-(9Z,12Z)-octadecadienoyl-sn-glycerol + H2O = 1-octadecanoyl-sn-glycerol + (9Z,12Z)-octadecadienoate + H(+). It catalyses the reaction 1,2-di-(9Z-octadecenoyl)-sn-glycerol + H2O = 1-(9Z-octadecenoyl)-sn-glycerol + (9Z)-octadecenoate + H(+). The catalysed reaction is 2,3-di-(9Z)-octadecenoyl-sn-glycerol + H2O = 3-(9Z-octadecenoyl)-sn-glycerol + (9Z)-octadecenoate + H(+). The enzyme catalyses 1,3-di-(9Z-octadecenoyl)-glycerol + H2O = 1-(9Z-octadecenoyl)-glycerol + (9Z)-octadecenoate + H(+). It carries out the reaction 1-(9Z-octadecenoyl)-glycerol + H2O = glycerol + (9Z)-octadecenoate + H(+). It catalyses the reaction 2-(9Z-octadecenoyl)-glycerol + H2O = glycerol + (9Z)-octadecenoate + H(+). Its activity is regulated as follows. Up-regulated by bile acids such as deoxycholate. Inhibited by diisopropyl fluorophosphate. Its function is as follows. Calcium-independent membrane-associated phospholipase that catalyzes complete diacylation of phospholipids by hydrolyzing both sn-1 and sn-2 fatty acyl chains attached to the glycerol backbone (phospholipase B activity). Has dual phospholipase and lysophospholipase activities toward diacylphospholipids. Preferentially cleaves sn-2 ester bonds over sn-1 bonds. Acts as a lipase toward glycerolipid substrates. Hydrolyzes fatty acyl chains of diacylglycerols with preference for the sn-2 position and of triacylglycerols with not positional selectivity. May also hydrolyze long chain retinyl esters such as retinyl palmitate. May contribute to digestion of dietary phospholipids, glycerolipids and retinoids, facilitating lipid absorption at the brush border. This chain is Phospholipase B1, membrane-associated (Plb1), found in Rattus norvegicus (Rat).